A 286-amino-acid chain; its full sequence is Shikimate dehydrogenase (NADP(+)) (286 aa).

Shikimate contacts are provided by residues 22–24 and Thr-71; that span reads SRS. The active-site Proton acceptor is the Lys-75. NADP(+) is bound at residue Glu-87. The shikimate site is built by Asn-96 and Asp-111. NADP(+)-binding positions include 136–140, 160–165, and Ile-225; these read GAGGA and NRTPER. Tyr-227 lines the shikimate pocket. Gly-248 lines the NADP(+) pocket.

Belongs to the shikimate dehydrogenase family. In terms of assembly, homodimer.

The catalysed reaction is shikimate + NADP(+) = 3-dehydroshikimate + NADPH + H(+). It functions in the pathway metabolic intermediate biosynthesis; chorismate biosynthesis; chorismate from D-erythrose 4-phosphate and phosphoenolpyruvate: step 4/7. Its function is as follows. Involved in the biosynthesis of the chorismate, which leads to the biosynthesis of aromatic amino acids. Catalyzes the reversible NADPH linked reduction of 3-dehydroshikimate (DHSA) to yield shikimate (SA). The protein is Shikimate dehydrogenase (NADP(+)) of Sinorhizobium medicae (strain WSM419) (Ensifer medicae).